Here is a 314-residue protein sequence, read N- to C-terminus: MYSQQKQQDIINNLHTIRDYIRWSISEMTANNVYFGHGSESIWDEAVHLVLSAINVAHDIDSNMVGSRLLTEEKKIIIDYVYQRACLRKPLPYILKKAWFAGMEFDIDERVIIPRSPIAELIRNEFSPWINDIDDVTSVLDLCTGSGCIGIACSNVFEDANITLVDISDDALAVANHNIKKHQLSDRVRAIKSDLFDNLHGQKFDLIVSNPPYVDKQDLDTMPHEYHYEPKLALEAGDDGLDLAKRIILEADKYMTENGVLIVEVGNSQYALMEMCPDIPFTWLSFADGGDGVLLLTYDELVKYKDAFKKYFQK.

The protein belongs to the protein N5-glutamine methyltransferase family. PrmB subfamily.

The catalysed reaction is L-glutaminyl-[ribosomal protein uL3] + S-adenosyl-L-methionine = N(5)-methyl-L-glutaminyl-[ribosomal protein uL3] + S-adenosyl-L-homocysteine + H(+). Its function is as follows. Methylates large ribosomal subunit protein uL3 on a specific glutamine residue. This chain is Ribosomal protein uL3 glutamine methyltransferase, found in Francisella tularensis subsp. tularensis (strain SCHU S4 / Schu 4).